A 663-amino-acid chain; its full sequence is Alpha-1,4-glucan:maltose-1-phosphate maltosyltransferase (663 aa).

The segment at 238-266 (IGETNRKGPDDAPEAGPDDPGSPWAIGGF) is disordered. Alpha-maltose 1-phosphate-binding residues include K244, Q309, and D344. D380 functions as the Nucleophile in the catalytic mechanism. N381 provides a ligand contact to alpha-maltose 1-phosphate. Residue E409 is the Proton donor of the active site. 521 to 522 (KY) contacts alpha-maltose 1-phosphate.

It belongs to the glycosyl hydrolase 13 family. GlgE subfamily. In terms of assembly, homodimer.

It catalyses the reaction alpha-maltose 1-phosphate + [(1-&gt;4)-alpha-D-glucosyl](n) = [(1-&gt;4)-alpha-D-glucosyl](n+2) + phosphate. Its function is as follows. Maltosyltransferase that uses maltose 1-phosphate (M1P) as the sugar donor to elongate linear or branched alpha-(1-&gt;4)-glucans. Is involved in a branched alpha-glucan biosynthetic pathway from trehalose, together with TreS, Mak and GlgB. This is Alpha-1,4-glucan:maltose-1-phosphate maltosyltransferase from Salinibacter ruber (strain DSM 13855 / M31).